Reading from the N-terminus, the 169-residue chain is RNA annealing protein YRA2 (169 aa).

An RRM domain is found at 45–119 (KRLRFTNVPL…GTVTVEIFEQ (75 aa)). A disordered region spans residues 119–169 (QERRPDRRRRTQRDNRRGNGRGSRGSHYKRQDRPAMEDELNAELEDYMKSS).

Belongs to the YRA1 family. As to quaternary structure, associates with mRNPs.

It localises to the nucleus. In terms of biological role, involved in export of poly(A) mRNAs from the nucleus. Recruited to the coding sequences as well as poly-A sites of active genes. This Zygosaccharomyces rouxii (strain ATCC 2623 / CBS 732 / NBRC 1130 / NCYC 568 / NRRL Y-229) protein is RNA annealing protein YRA2 (YRA2).